An 801-amino-acid chain; its full sequence is PR domain zinc finger protein 4 (801 aa).

An SET domain is found at 412-529 (KQLVLRQSIV…PENELLFYYS (118 aa)). The C2H2-type 1; atypical zinc finger occupies 545-566 (HLCNCGKECNSYTEFKAHLTSH). 4 consecutive C2H2-type zinc fingers follow at residues 618–640 (HKCDFCSKAFSDPSNLRTHLKIH), 646–668 (YRCTLCDKSFTQKAHLESHMVIH), 674–696 (LKCDYCDKLFMRRQDLKQHVLIH), and 702–724 (IKCPKCDKLFLRTNHLKKHLNSH). The C2H2-type 6; atypical zinc-finger motif lies at 730–752 (YVCEKCTKAYLTKYHLTRHLKTC). Residues 751–782 (TCKGPTSSSSAPEEEEEDDSEEEDLADSVGTE) are disordered. The segment covering 762 to 776 (PEEEEEDDSEEEDLA) has biased composition (acidic residues).

It belongs to the class V-like SAM-binding methyltransferase superfamily.

Its subcellular location is the nucleus. May function as a transcription factor involved in cell differentiation. The polypeptide is PR domain zinc finger protein 4 (PRDM4) (Pongo abelii (Sumatran orangutan)).